Reading from the N-terminus, the 277-residue chain is uncharacterized protein (277 aa).

4 consecutive transmembrane segments (helical) span residues 37–59, 63–82, 214–236, and 246–268; these read YLRY…LYIW, LIFG…PKVI, MLCG…KTYI, and WITS…TYLF.

The protein localises to the cell membrane. This is an uncharacterized protein from Bacillus anthracis.